An 888-amino-acid chain; its full sequence is Aconitate hydratase A (888 aa).

[4Fe-4S] cluster is bound by residues cysteine 433, cysteine 499, and cysteine 502.

Belongs to the aconitase/IPM isomerase family. Monomer. The cofactor is [4Fe-4S] cluster.

It carries out the reaction citrate = D-threo-isocitrate. The catalysed reaction is (2S,3R)-3-hydroxybutane-1,2,3-tricarboxylate = 2-methyl-cis-aconitate + H2O. It functions in the pathway carbohydrate metabolism; tricarboxylic acid cycle; isocitrate from oxaloacetate: step 2/2. It participates in organic acid metabolism; propanoate degradation. Involved in the catabolism of short chain fatty acids (SCFA) via the tricarboxylic acid (TCA)(acetyl degradation route) and probably the 2-methylcitrate cycle I (propionate degradation route). Catalyzes the reversible isomerization of citrate to isocitrate via cis-aconitate. Could catalyze the hydration of 2-methyl-cis-aconitate to yield (2R,3S)-2-methylisocitrate. The apo form of AcnA functions as a RNA-binding regulatory protein. This chain is Aconitate hydratase A (acn), found in Streptococcus mutans serotype c (strain ATCC 700610 / UA159).